Here is a 151-residue protein sequence, read N- to C-terminus: D-aminoacyl-tRNA deacylase (151 aa).

Residues 136–137 (GP) carry the Gly-cisPro motif, important for rejection of L-amino acids motif.

Belongs to the DTD family. Homodimer.

The protein localises to the cytoplasm. It carries out the reaction glycyl-tRNA(Ala) + H2O = tRNA(Ala) + glycine + H(+). The enzyme catalyses a D-aminoacyl-tRNA + H2O = a tRNA + a D-alpha-amino acid + H(+). An aminoacyl-tRNA editing enzyme that deacylates mischarged D-aminoacyl-tRNAs. Also deacylates mischarged glycyl-tRNA(Ala), protecting cells against glycine mischarging by AlaRS. Acts via tRNA-based rather than protein-based catalysis; rejects L-amino acids rather than detecting D-amino acids in the active site. By recycling D-aminoacyl-tRNA to D-amino acids and free tRNA molecules, this enzyme counteracts the toxicity associated with the formation of D-aminoacyl-tRNA entities in vivo and helps enforce protein L-homochirality. The protein is D-aminoacyl-tRNA deacylase of Lactococcus lactis subsp. lactis (strain IL1403) (Streptococcus lactis).